Reading from the N-terminus, the 99-residue chain is Aspartyl/glutamyl-tRNA(Asn/Gln) amidotransferase subunit C (99 aa).

This sequence belongs to the GatC family. In terms of assembly, heterotrimer of A, B and C subunits.

It catalyses the reaction L-glutamyl-tRNA(Gln) + L-glutamine + ATP + H2O = L-glutaminyl-tRNA(Gln) + L-glutamate + ADP + phosphate + H(+). It carries out the reaction L-aspartyl-tRNA(Asn) + L-glutamine + ATP + H2O = L-asparaginyl-tRNA(Asn) + L-glutamate + ADP + phosphate + 2 H(+). Allows the formation of correctly charged Asn-tRNA(Asn) or Gln-tRNA(Gln) through the transamidation of misacylated Asp-tRNA(Asn) or Glu-tRNA(Gln) in organisms which lack either or both of asparaginyl-tRNA or glutaminyl-tRNA synthetases. The reaction takes place in the presence of glutamine and ATP through an activated phospho-Asp-tRNA(Asn) or phospho-Glu-tRNA(Gln). This Mycolicibacterium vanbaalenii (strain DSM 7251 / JCM 13017 / BCRC 16820 / KCTC 9966 / NRRL B-24157 / PYR-1) (Mycobacterium vanbaalenii) protein is Aspartyl/glutamyl-tRNA(Asn/Gln) amidotransferase subunit C.